The chain runs to 388 residues: Succinate--CoA ligase [ADP-forming] subunit beta (388 aa).

Residues 9 to 244 form the ATP-grasp domain; it reads KQLFAEFGLP…PSQEDKREAH (236 aa). ATP-binding positions include K46, 53–55, E99, S102, and E107; that span reads GRG. Mg(2+)-binding residues include N199 and D213. Substrate-binding positions include N264 and 321–323; that span reads GIV.

It belongs to the succinate/malate CoA ligase beta subunit family. In terms of assembly, heterotetramer of two alpha and two beta subunits. Mg(2+) serves as cofactor.

It catalyses the reaction succinate + ATP + CoA = succinyl-CoA + ADP + phosphate. It carries out the reaction GTP + succinate + CoA = succinyl-CoA + GDP + phosphate. It functions in the pathway carbohydrate metabolism; tricarboxylic acid cycle; succinate from succinyl-CoA (ligase route): step 1/1. Its function is as follows. Succinyl-CoA synthetase functions in the citric acid cycle (TCA), coupling the hydrolysis of succinyl-CoA to the synthesis of either ATP or GTP and thus represents the only step of substrate-level phosphorylation in the TCA. The beta subunit provides nucleotide specificity of the enzyme and binds the substrate succinate, while the binding sites for coenzyme A and phosphate are found in the alpha subunit. The protein is Succinate--CoA ligase [ADP-forming] subunit beta of Vibrio vulnificus (strain CMCP6).